The primary structure comprises 855 residues: Cone cGMP-specific 3',5'-cyclic phosphodiesterase subunit alpha' (855 aa).

2 GAF domains span residues 70–219 and 251–428; these read SVEL…SIIL and DVER…GWSL. 3',5'-cyclic GMP is bound by residues Ser92, Ser116, 164–167, and Thr171; that span reads DKQT. Positions 481-814 constitute a PDEase domain; it reads EEKQLVTILK…VEWKSLADEY (334 aa). His557 serves as the catalytic Proton donor. Residues His561, His597, Asp598, and Asp718 each contribute to the a divalent metal cation site. A disordered region spans residues 823–855; it reads EMKKQEEGNTTEKAVEDSGGGGDDKKSKTCLML. Cys852 bears the Cysteine methyl ester mark. Cys852 carries the S-geranylgeranyl cysteine lipid modification. Positions 853–855 are cleaved as a propeptide — removed in mature form; that stretch reads LML.

The protein belongs to the cyclic nucleotide phosphodiesterase family. As to quaternary structure, composed of two alpha' subunits that are associated with 3 smaller proteins of 11, 13, and 15 kDa. The cofactor is a divalent metal cation.

Its subcellular location is the cell membrane. It carries out the reaction 3',5'-cyclic GMP + H2O = GMP + H(+). As cone-specific cGMP phosphodiesterase, it plays an essential role in light detection and cone phototransduction by rapidly decreasing intracellular levels of cGMP. In Bos taurus (Bovine), this protein is Cone cGMP-specific 3',5'-cyclic phosphodiesterase subunit alpha' (PDE6C).